The primary structure comprises 205 residues: uncharacterized protein (205 aa).

It to M.jannaschii MJ0638 and MJ1252 and M.tuberculosis Rv2003c.

This is an uncharacterized protein from Methanocaldococcus jannaschii (strain ATCC 43067 / DSM 2661 / JAL-1 / JCM 10045 / NBRC 100440) (Methanococcus jannaschii).